Consider the following 533-residue polypeptide: DNA-directed RNA polymerase III subunit RPC3 (533 aa).

Residues 161-183 (PLVPDTDSSDPGPPPPAPNLVIN) form a disordered region. At Ser-194 the chain carries Phosphoserine. The segment at 197–228 (GKGKRRRSSDEDAAGEPKAKKPRCTDNEEPTP) is disordered. A compositionally biased stretch (basic and acidic residues) spans 211–222 (GEPKAKKPRCTD).

This sequence belongs to the eukaryotic RPC3/POLR3C RNA polymerase subunit family. Component of the RNA polymerase III complex consisting of 17 subunits: a ten-subunit horseshoe-shaped catalytic core composed of POLR3A/RPC1, POLR3B/RPC2, POLR1C/RPAC1, POLR1D/RPAC2, POLR3K/RPC10, POLR2E/RPABC1, POLR2F/RPABC2, POLR2H/RPABC3, POLR2K/RPABC4 and POLR2L/RPABC5; a mobile stalk composed of two subunits POLR3H/RPC8 and CRCP/RPC9, protruding from the core and functioning primarily in transcription initiation; and additional subunits homologous to general transcription factors of the RNA polymerase II machinery, POLR3C/RPC3-POLR3F/RPC6-POLR3G/RPC7 heterotrimer required for transcription initiation and POLR3D/RPC4-POLR3E/RPC5 heterodimer involved in both transcription initiation and termination. Directly interacts with POLR3G/RPC7 and POLR3GL. Directly interacts with POLR3F/RPC6. Interacts with GTF3C4. As part of the RNA polymerase III complex, interacts with PKP2.

It is found in the nucleus. Its function is as follows. DNA-dependent RNA polymerase catalyzes the transcription of DNA into RNA using the four ribonucleoside triphosphates as substrates. Specific peripheric component of RNA polymerase III (Pol III) which synthesizes small non-coding RNAs including 5S rRNA, snRNAs, tRNAs and miRNAs from at least 500 distinct genomic loci. Part of POLR3C/RPC3-POLR3F/RPC6-POLR3G/RPC7 heterotrimer, coordinates the dynamics of Pol III stalk and clamp modules during the transition from apo to elongation state. Pol III plays a key role in sensing and limiting infection by intracellular bacteria and DNA viruses. Acts as a nuclear and cytosolic DNA sensor involved in innate immune response. Can sense non-self dsDNA that serves as template for transcription into dsRNA. The non-self RNA polymerase III transcripts, such as Epstein-Barr virus-encoded RNAs (EBERs) induce type I interferon and NF-kappa-B through the RIG-I pathway. Preferentially binds single-stranded DNA (ssDNA) in a sequence-independent manner. The polypeptide is DNA-directed RNA polymerase III subunit RPC3 (Rattus norvegicus (Rat)).